A 1407-amino-acid chain; its full sequence is DNA-directed RNA polymerase subunit beta' (1407 aa).

The Zn(2+) site is built by Cys-70, Cys-72, Cys-85, and Cys-88. The Mg(2+) site is built by Asp-460, Asp-462, and Asp-464. Lys-972 is subject to N6-acetyllysine.

Belongs to the RNA polymerase beta' chain family. The RNAP catalytic core consists of 2 alpha, 1 beta, 1 beta' and 1 omega subunit. When a sigma factor is associated with the core the holoenzyme is formed, which can initiate transcription. Mg(2+) serves as cofactor. It depends on Zn(2+) as a cofactor.

It catalyses the reaction RNA(n) + a ribonucleoside 5'-triphosphate = RNA(n+1) + diphosphate. DNA-dependent RNA polymerase catalyzes the transcription of DNA into RNA using the four ribonucleoside triphosphates as substrates. The sequence is that of DNA-directed RNA polymerase subunit beta' from Escherichia coli O6:K15:H31 (strain 536 / UPEC).